The primary structure comprises 149 residues: MRVVVQRVKSSKVEVDGKIIGSIKGGLNVLLGICKGDTQKDIEYLVDKILGLRIFEDECGKMNKSLLDVKGELLVISQFTLYGDCRKGKRPSFIEALGGEEAKKLYEEFIKKCKEVLGEVQMGEFGADMLVSIENDGPVTLMIDSKKVF.

The Gly-cisPro motif, important for rejection of L-amino acids signature appears at 137-138; that stretch reads GP.

This sequence belongs to the DTD family. Homodimer.

It localises to the cytoplasm. The catalysed reaction is glycyl-tRNA(Ala) + H2O = tRNA(Ala) + glycine + H(+). It carries out the reaction a D-aminoacyl-tRNA + H2O = a tRNA + a D-alpha-amino acid + H(+). In terms of biological role, an aminoacyl-tRNA editing enzyme that deacylates mischarged D-aminoacyl-tRNAs. Also deacylates mischarged glycyl-tRNA(Ala), protecting cells against glycine mischarging by AlaRS. Acts via tRNA-based rather than protein-based catalysis; rejects L-amino acids rather than detecting D-amino acids in the active site. By recycling D-aminoacyl-tRNA to D-amino acids and free tRNA molecules, this enzyme counteracts the toxicity associated with the formation of D-aminoacyl-tRNA entities in vivo and helps enforce protein L-homochirality. This chain is D-aminoacyl-tRNA deacylase, found in Clostridium tetani (strain Massachusetts / E88).